Consider the following 76-residue polypeptide: uncharacterized protein (76 aa).

Helical transmembrane passes span Leu-2–Phe-22, Leu-28–Ile-48, and Glu-56–Ile-76.

The protein resides in the cell membrane. This is an uncharacterized protein from Bacillus subtilis (strain 168).